We begin with the raw amino-acid sequence, 140 residues long: Alpha-lactalbumin (140 aa).

Positions 1-19 are cleaved as a signal peptide; it reads MMSLLSLLLLGIALPATQA. The C-type lysozyme domain occupies 20-140; sequence IDYRKCQASQ…CIEDLDQWRC (121 aa). Cystine bridges form between cysteine 25–cysteine 140, cysteine 47–cysteine 131, cysteine 80–cysteine 96, and cysteine 92–cysteine 110. Asparagine 63 carries N-linked (GlcNAc...) asparagine glycosylation. Ca(2+) is bound by residues lysine 98, aspartate 101, aspartate 103, aspartate 106, and aspartate 107.

Belongs to the glycosyl hydrolase 22 family. As to quaternary structure, lactose synthase (LS) is a heterodimer of a catalytic component, beta1,4-galactosyltransferase (beta4Gal-T1) and a regulatory component, alpha-lactalbumin (LA). Mammary gland specific. Secreted in milk.

The protein localises to the secreted. Functionally, regulatory subunit of lactose synthase, changes the substrate specificity of galactosyltransferase in the mammary gland making glucose a good acceptor substrate for this enzyme. This enables LS to synthesize lactose, the major carbohydrate component of milk. In other tissues, galactosyltransferase transfers galactose onto the N-acetylglucosamine of the oligosaccharide chains in glycoproteins. This chain is Alpha-lactalbumin (LALBA), found in Notamacropus eugenii (Tammar wallaby).